A 445-amino-acid chain; its full sequence is Phosphoglucosamine mutase (445 aa).

The Phosphoserine intermediate role is filled by S102. 4 residues coordinate Mg(2+): S102, D240, D242, and D244. Position 102 is a phosphoserine (S102).

Belongs to the phosphohexose mutase family. Mg(2+) is required as a cofactor. In terms of processing, activated by phosphorylation.

It catalyses the reaction alpha-D-glucosamine 1-phosphate = D-glucosamine 6-phosphate. Its function is as follows. Catalyzes the conversion of glucosamine-6-phosphate to glucosamine-1-phosphate. This Mycobacterium marinum (strain ATCC BAA-535 / M) protein is Phosphoglucosamine mutase.